The primary structure comprises 446 residues: NADH-ubiquinone oxidoreductase chain 4 (446 aa).

Transmembrane regions (helical) follow at residues 4–24 (IILF…YWMV), 56–76 (MLSY…LLAS), 93–113 (IVIL…FMFY), 114–134 (LFFE…GYQP), 141–161 (VYLL…IFYV), 182–202 (LLYF…LVHL), 212–232 (PVSG…YGLL), 245–265 (YSFV…LVCL), 272–292 (ALIA…LLTM), 297–317 (LCGS…LFCL), 330–350 (MLIN…WFLL), 373–393 (IVSW…FSAA), and 426–446 (LLHW…ILWL).

It belongs to the complex I subunit 4 family.

The protein localises to the mitochondrion membrane. The catalysed reaction is a ubiquinone + NADH + 5 H(+)(in) = a ubiquinol + NAD(+) + 4 H(+)(out). Its function is as follows. Core subunit of the mitochondrial membrane respiratory chain NADH dehydrogenase (Complex I) that is believed to belong to the minimal assembly required for catalysis. Complex I functions in the transfer of electrons from NADH to the respiratory chain. The immediate electron acceptor for the enzyme is believed to be ubiquinone. The chain is NADH-ubiquinone oxidoreductase chain 4 (mt:ND4) from Drosophila yakuba (Fruit fly).